A 283-amino-acid polypeptide reads, in one-letter code: Pantothenate synthetase (283 aa).

Residue 26–33 (MGNLHEGH) coordinates ATP. The active-site Proton donor is the His33. Position 57 (Gln57) interacts with (R)-pantoate. Position 57 (Gln57) interacts with beta-alanine. 144–147 (GKKD) provides a ligand contact to ATP. Gln150 contributes to the (R)-pantoate binding site. ATP is bound by residues Val173 and 181–184 (LSSR).

Belongs to the pantothenate synthetase family. As to quaternary structure, homodimer.

The protein resides in the cytoplasm. The catalysed reaction is (R)-pantoate + beta-alanine + ATP = (R)-pantothenate + AMP + diphosphate + H(+). Its pathway is cofactor biosynthesis; (R)-pantothenate biosynthesis; (R)-pantothenate from (R)-pantoate and beta-alanine: step 1/1. In terms of biological role, catalyzes the condensation of pantoate with beta-alanine in an ATP-dependent reaction via a pantoyl-adenylate intermediate. The sequence is that of Pantothenate synthetase from Ralstonia pickettii (strain 12J).